A 628-amino-acid polypeptide reads, in one-letter code: Eukaryotic peptide chain release factor GTP-binding subunit ERF3B (628 aa).

The span at 1 to 10 shows a compositional bias: low complexity; that stretch reads MDSGSSSSDS. 3 disordered regions span residues 1 to 49, 72 to 124, and 146 to 195; these read MDSG…SAFS, FLRG…LEGS, and LEES…VIVP. In terms of domain architecture, tr-type G spans 201–425; the sequence is KEHVNVVFIG…YLDNLPNFNR (225 aa). The interval 210–217 is G1; it reads GHVDAGKS. Residue 213–218 coordinates GTP; the sequence is DAGKST. Residues 266-270 are G2; the sequence is GKTVE. A G3 region spans residues 287–290; sequence DAPG. GTP is bound by residues 349 to 352 and 391 to 393; these read NKMD and SGL. Residues 349 to 352 are G4; it reads NKMD. The tract at residues 391–393 is G5; sequence SGL.

It belongs to the TRAFAC class translation factor GTPase superfamily. Classic translation factor GTPase family. ERF3 subfamily. As to quaternary structure, component of the eRF1-eRF3-GTP ternary complex, composed of ETF1/ERF1 and ERF3 (GSPT1/ERF3A or GSPT2/ERF3B) and GTP. Component of the transient SURF (SMG1-UPF1-eRF1-eRF3) complex. Interacts with UPF1 and PABPC1. As to expression, highly expressed in IUCC stage II colorectal cancer (CRC).

The protein localises to the cytoplasm. It catalyses the reaction GTP + H2O = GDP + phosphate + H(+). In terms of biological role, GTPase component of the eRF1-eRF3-GTP ternary complex, a ternary complex that mediates translation termination in response to the termination codons UAA, UAG and UGA. GSPT2/ERF3B mediates ETF1/ERF1 delivery to stop codons: The eRF1-eRF3-GTP complex binds to a stop codon in the ribosomal A-site. GTP hydrolysis by GSPT2/ERF3B induces a conformational change that leads to its dissociation, permitting ETF1/ERF1 to accommodate fully in the A-site. Component of the transient SURF complex which recruits UPF1 to stalled ribosomes in the context of nonsense-mediated decay (NMD) of mRNAs containing premature stop codons. This is Eukaryotic peptide chain release factor GTP-binding subunit ERF3B (GSPT2) from Homo sapiens (Human).